We begin with the raw amino-acid sequence, 230 residues long: Demethylmenaquinone methyltransferase (230 aa).

Residues threonine 62, aspartate 80, 100–101 (DG), and serine 117 contribute to the S-adenosyl-L-methionine site.

It belongs to the class I-like SAM-binding methyltransferase superfamily. MenG/UbiE family.

It catalyses the reaction a 2-demethylmenaquinol + S-adenosyl-L-methionine = a menaquinol + S-adenosyl-L-homocysteine + H(+). It functions in the pathway quinol/quinone metabolism; menaquinone biosynthesis; menaquinol from 1,4-dihydroxy-2-naphthoate: step 2/2. Its function is as follows. Methyltransferase required for the conversion of demethylmenaquinol (DMKH2) to menaquinol (MKH2). This is Demethylmenaquinone methyltransferase from Corynebacterium glutamicum (strain ATCC 13032 / DSM 20300 / JCM 1318 / BCRC 11384 / CCUG 27702 / LMG 3730 / NBRC 12168 / NCIMB 10025 / NRRL B-2784 / 534).